We begin with the raw amino-acid sequence, 421 residues long: Autophagy-related protein 17 (421 aa).

This sequence belongs to the ATG17 family. As to quaternary structure, forms a complex with ATG13, ATG29 and CIS1/ATG31. The ATG17-ATG29-ATG31 complex interacts with the ATG1-ATG13 complex. Forms a complex with SNX4 and ATG20. Interacts with ATG11.

The protein resides in the cytoplasm. The protein localises to the preautophagosomal structure membrane. Autophagy-specific protein that functions with ATG13, ATG29, and CIS1/ATG31 in response to autophagy-inducing signals as a scaffold to recruit other ATG proteins to organize pre-autophagosomal structure (PAS) formation. Modulates the timing and magnitude of the autophagy response, such as the size of the sequestering vesicles, through interacting with and regulating ATG1 kinase activity. Plays particularly a role in pexophagy and nucleophagy. With ATG13, is required for ATG1 activation by autophosphorylation. Recruits ATG9 to the pre-autophagosomal structure. The chain is Autophagy-related protein 17 from Kluyveromyces marxianus (strain DMKU3-1042 / BCC 29191 / NBRC 104275) (Yeast).